The sequence spans 463 residues: ATP-dependent protease ATPase subunit HslU (463 aa).

Residues V21, G63–E68, D276, E341, and R413 each bind ATP.

Belongs to the ClpX chaperone family. HslU subfamily. As to quaternary structure, a double ring-shaped homohexamer of HslV is capped on each side by a ring-shaped HslU homohexamer. The assembly of the HslU/HslV complex is dependent on binding of ATP.

Its subcellular location is the cytoplasm. Its function is as follows. ATPase subunit of a proteasome-like degradation complex; this subunit has chaperone activity. The binding of ATP and its subsequent hydrolysis by HslU are essential for unfolding of protein substrates subsequently hydrolyzed by HslV. HslU recognizes the N-terminal part of its protein substrates and unfolds these before they are guided to HslV for hydrolysis. In Thermotoga sp. (strain RQ2), this protein is ATP-dependent protease ATPase subunit HslU.